The chain runs to 31 residues: Histone H1.3 (31 aa).

The protein belongs to the histone H1/H5 family.

It is found in the nucleus. Its subcellular location is the chromosome. In terms of biological role, histones H1 are necessary for the condensation of nucleosome chains into higher-order structures. The chain is Histone H1.3 from Triticum aestivum (Wheat).